We begin with the raw amino-acid sequence, 1183 residues long: Phospholipid-transporting ATPase FetA (1183 aa).

The next 3 helical transmembrane spans lie at 96–116 (ISSL…SITG), 299–319 (VLVV…SIGH), and 348–368 (ALIF…SLYV). The 4-aspartylphosphate intermediate role is filled by Asp416. 12 residues coordinate ATP: Asp416, Lys417, Thr418, Glu519, Phe560, Lys583, Arg617, Thr697, Gly698, Asp699, Arg812, and Lys818. Asp416 contributes to the Mg(2+) binding site. Thr418 provides a ligand contact to Mg(2+). Asp838 is a Mg(2+) binding site. 2 residues coordinate ATP: Asn841 and Asp842. Residue Asp842 participates in Mg(2+) binding. 6 helical membrane passes run 904–924 (FAFT…AQTV), 927–947 (IWFI…GLSL), 981–1001 (CLLH…GTVF), 1014–1034 (FQSF…MQIA), 1049–1069 (WGSL…GLCL), and 1090–1110 (IWLC…GYNF).

It belongs to the cation transport ATPase (P-type) (TC 3.A.3) family. Type IV subfamily. The cofactor is Mg(2+). Highly expressed in testis.

Its subcellular location is the cytoplasmic vesicle. The protein localises to the secretory vesicle. It localises to the acrosome membrane. It catalyses the reaction ATP + H2O + phospholipidSide 1 = ADP + phosphate + phospholipidSide 2.. Functionally, P4-ATPase flippase which catalyzes the hydrolysis of ATP coupled to the transport of aminophospholipids from the outer to the inner leaflet of various membranes and ensures the maintenance of asymmetric distribution of phospholipids. Phospholipid translocation also seems to be implicated in vesicle formation and in uptake of lipid signaling molecules. May play a role in phospholid transport across membranes and in acrosome formation. This chain is Phospholipid-transporting ATPase FetA (Atp8b5), found in Mus musculus (Mouse).